A 209-amino-acid polypeptide reads, in one-letter code: Kynurenine formamidase (209 aa).

Residue tryptophan 20 coordinates substrate. Zn(2+)-binding residues include histidine 50, histidine 54, and aspartate 56. The active-site Proton donor/acceptor is the histidine 60. Zn(2+) contacts are provided by histidine 161 and glutamate 173.

It belongs to the Cyclase 1 superfamily. KynB family. As to quaternary structure, homodimer. Zn(2+) serves as cofactor.

The catalysed reaction is N-formyl-L-kynurenine + H2O = L-kynurenine + formate + H(+). The protein operates within amino-acid degradation; L-tryptophan degradation via kynurenine pathway; L-kynurenine from L-tryptophan: step 2/2. In terms of biological role, catalyzes the hydrolysis of N-formyl-L-kynurenine to L-kynurenine, the second step in the kynurenine pathway of tryptophan degradation. This Bacillus thuringiensis (strain Al Hakam) protein is Kynurenine formamidase.